The sequence spans 570 residues: MNLEELVLKYALANAVKYGGKADVKAVMSKIMAEVPELRPKAREVKSMVEAVVARVNSMSLEEQLRLLRERWPETLEERRVEQKRPGIENLAELPNVKGGVVVRFAPNPDFVLHLGSARPAILNYAYRLKYGGKFILRFEDTDPRTKKPLVTSEINAYETIREDLKWLGIKWDEEYIQSMRMEIYYEHIKKLLEKGAAYVDLCRPEEWRKLRNAGRACPHREQSPEENLELWDRMLEGRFKEGEAVVRIKTDLSHPDPSVRDWVAFRIIDTSKTPHPLVGDKYIVWPTYNFAVSIDDHLMGITHVLRAQEHSVNTIKQSYIFKHFGWEQPVTIHFGRLKIEGASLSKSKLKALGVRYDDISLPTLAGLRNRGILPEAIWELILTVGVKPSDSTIALSNLFALNRKRIEPIANRYMYVADPIKLVFKSDRELLAKIPLHPSFRERGERIYKFGPGTIELFVPRQDIKPGAVVRLMELANVEIIAVENGVAHGRLHSVGIDEARKVGAPIIQWVYEPIEIHVVKPVAVGKKVEEIGLGESALEKVETGAYVQFMRYGFLKKVGPSAFVYVHD.

Residues 107–117 (PNPDFVLHLGS) carry the 'HIGH' region motif.

This sequence belongs to the class-I aminoacyl-tRNA synthetase family. Glutamate--tRNA ligase type 2 subfamily.

It localises to the cytoplasm. The enzyme catalyses tRNA(Glu) + L-glutamate + ATP = L-glutamyl-tRNA(Glu) + AMP + diphosphate. Its function is as follows. Catalyzes the attachment of glutamate to tRNA(Glu) in a two-step reaction: glutamate is first activated by ATP to form Glu-AMP and then transferred to the acceptor end of tRNA(Glu). The chain is Glutamate--tRNA ligase from Pyrobaculum islandicum (strain DSM 4184 / JCM 9189 / GEO3).